The primary structure comprises 115 residues: SPbeta prophage-derived uncharacterized membrane protein YosE (115 aa).

Transmembrane regions (helical) follow at residues 20–42, 58–78, and 95–115; these read IVVG…YGLN, VHVT…FVKG, and GKSL…TLFI.

Its subcellular location is the cell membrane. The chain is SPbeta prophage-derived uncharacterized membrane protein YosE (yosE) from Bacillus subtilis (strain 168).